The chain runs to 203 residues: Peptidyl-prolyl cis-trans isomerase FKBP11 (203 aa).

The N-terminal stretch at 1 to 29 (MTLRPSLLPLRLLLLLLLLLRGAVCQAEA) is a signal peptide. The 88-residue stretch at 59-146 (GDTLHIHYSG…HFDVELIALI (88 aa)) folds into the PPIase FKBP-type domain. Residues 158-178 (ILPLVGMAMVPALLGLIGYHL) traverse the membrane as a helical segment.

It belongs to the FKBP-type PPIase family. Interacts with IFITM5.

The protein localises to the membrane. The catalysed reaction is [protein]-peptidylproline (omega=180) = [protein]-peptidylproline (omega=0). PPIases accelerate the folding of proteins during protein synthesis. This chain is Peptidyl-prolyl cis-trans isomerase FKBP11 (FKBP11), found in Bos taurus (Bovine).